Consider the following 139-residue polypeptide: D-ribose pyranase (139 aa).

Catalysis depends on His-20, which acts as the Proton donor. Substrate contacts are provided by residues Asp-28, His-106, and 128-130 (YAN).

The protein belongs to the RbsD / FucU family. RbsD subfamily. In terms of assembly, homodecamer.

It localises to the cytoplasm. The catalysed reaction is beta-D-ribopyranose = beta-D-ribofuranose. It participates in carbohydrate metabolism; D-ribose degradation; D-ribose 5-phosphate from beta-D-ribopyranose: step 1/2. Its function is as follows. Catalyzes the interconversion of beta-pyran and beta-furan forms of D-ribose. This Salmonella choleraesuis (strain SC-B67) protein is D-ribose pyranase.